A 469-amino-acid chain; its full sequence is A-type ATP synthase subunit B 3 (469 aa).

The protein belongs to the ATPase alpha/beta chains family. As to quaternary structure, has multiple subunits with at least A(3), B(3), C, D, E, F, H, I and proteolipid K(x).

The protein localises to the cell membrane. Functionally, component of the A-type ATP synthase that produces ATP from ADP in the presence of a proton gradient across the membrane. The B chain is a regulatory subunit. This chain is A-type ATP synthase subunit B 3, found in Methanospirillum hungatei JF-1 (strain ATCC 27890 / DSM 864 / NBRC 100397 / JF-1).